Here is a 578-residue protein sequence, read N- to C-terminus: GRAM domain-containing protein 4 (578 aa).

A coiled-coil region spans residues 83–135 (HLEIALLEKHFLQEELRKLREETNIDTLKQELEKERQRRTELEQKITDIAKTR). The segment at 132–157 (AKTRTDESATQQLSKGPSQTNGADKQ) is disordered. Residues 139–154 (SATQQLSKGPSQTNGA) show a composition bias toward polar residues. 3 helical membrane-spanning segments follow: residues 236 to 256 (IAFI…MFLF), 334 to 354 (MTQK…FFHY), and 356 to 376 (TIGL…DFIF). Residues 446–524 (SSFHEIFSLL…TDITDIQKYK (79 aa)) form the GRAM domain.

It is found in the mitochondrion membrane. The protein resides in the endoplasmic reticulum membrane. In terms of biological role, plays a role as a mediator of e2f1-induced apoptosis in the absence of p53/TP53. The chain is GRAM domain-containing protein 4 (gramd4) from Xenopus laevis (African clawed frog).